The sequence spans 328 residues: LOB domain-containing protein 27 (328 aa).

An LOB domain is found at 35-136 (GACAACKYQR…EELKAVNSQL (102 aa)).

It belongs to the LOB domain-containing protein family.

In Arabidopsis thaliana (Mouse-ear cress), this protein is LOB domain-containing protein 27 (LBD27).